Here is a 396-residue protein sequence, read N- to C-terminus: Proton-coupled antiporter flippase LtaA (396 aa).

12 helical membrane-spanning segments follow: residues 15–34 (FILM…MYIL), 46–73 (IAVA…GFLL), 80–99 (IVLT…VIWF), 105–126 (VIIF…IMLS), 138–159 (GYVY…NLLI), 165–184 (RFAF…YYFV), 211–231 (LLLF…VPIL), 243–264 (TIEY…MLFL), 276–298 (MYGV…SMIV), 304–326 (WIIA…TFMA), 338–358 (WGVF…FGGL), and 370–390 (FYFS…YFIA).

The protein belongs to the major facilitator superfamily. LtaA family.

Its subcellular location is the cell membrane. It functions in the pathway cell wall biogenesis; lipoteichoic acid biosynthesis. Functionally, proton-coupled antiporter flippase that catalyzes the translocation, from the inner to the outer leaflet of the cell membrane, of the lipid-linked disaccharide (anchor-LLD) that anchors lipoteichoic acids (LTA) to the cell membrane. The sequence is that of Proton-coupled antiporter flippase LtaA (ltaA) from Staphylococcus aureus (strain MRSA252).